The following is a 616-amino-acid chain: Auxin efflux carrier component 4 (616 aa).

Residues 1–7 (MITWHDL) lie on the Extracellular side of the membrane. The helical transmembrane segment at 8-28 (YTVLTAVVPLYVAMILAYGSV) threads the bilayer. The Cytoplasmic segment spans residues 29-38 (QWWKIFSPDQ). The helical transmembrane segment at 39–59 (CSGINRFVAIFAVPLLSFHFI) threads the bilayer. Position 51 (V51) interacts with (indol-3-yl)acetate. Residues 60-70 (STNDPYAMNFR) lie on the Extracellular side of the membrane. The chain crosses the membrane as a helical span at residues 71 to 91 (FVAADTLQKIIMLVLLALWAN). Residues 92–101 (LTKNGSLEWM) lie on the Cytoplasmic side of the membrane. A helical transmembrane segment spans residues 102 to 122 (ITIFSLSTLPNTLVMGIPLLI). (indol-3-yl)acetate contacts are provided by N112 and L114. Topologically, residues 123 to 131 (AMYGTYAGS) are extracellular. Residues 132–152 (LMVQVVVLQCIIWYTLLLFLF) traverse the membrane as a helical segment. Position 145 (Y145) interacts with (indol-3-yl)acetate. Residues 153–476 (EYRGAKLLIM…LIRNPNTYSS (324 aa)) lie on the Cytoplasmic side of the membrane. S223, S240, and S280 each carry phosphoserine. The tract at residues 302-343 (AAGSYPAPNPEFSTGTGVSTKPNKIPKENQQQLQEKDSKASH) is disordered. The segment covering 312–334 (EFSTGTGVSTKPNKIPKENQQQL) has biased composition (polar residues). Phosphoserine occurs at positions 358 and 395. The segment at 390–411 (DQPRKSNARGGGDDIGGLDSGE) is disordered. A compositionally biased stretch (gly residues) spans 398–409 (RGGGDDIGGLDS). Residues 477–497 (LIGLIWALVAYRWHVAMPKIL) form a helical membrane-spanning segment. Residues 498 to 500 (QQS) lie on the Extracellular side of the membrane. A helical membrane pass occupies residues 501-521 (ISILSDAGLGMAMFSLGLFMA). Residues 522–535 (LQPKIIACGNSVAT) are Cytoplasmic-facing. Residues 536 to 556 (FAMAVRFITGPAIMAVAGIAI) traverse the membrane as a helical segment. Topologically, residues 557–561 (GLHGD) are extracellular. A helical membrane pass occupies residues 562-582 (LLRIAIVQAALPQGIVPFVFA). (indol-3-yl)acetate contacts are provided by I576 and V577. Residues 583–595 (KEYNVHPTILSTG) lie on the Cytoplasmic side of the membrane. A helical membrane pass occupies residues 596-616 (VIFGMLIALPITLVYYILLGL).

This sequence belongs to the auxin efflux carrier (TC 2.A.69.1) family. As to quaternary structure, homodimer. As to expression, expressed in the quiescent center precursors and surrounding cells. Present in columella cells of primary roots. Detected in pollen.

It localises to the cell membrane. Acts as a component of the auxin efflux carrier. Plays a role in generating a sink for auxin into columella cells. Maintains the endogenous auxin gradient, which is essential for correct root patterning. Involved in EXO70A3-regulated gravitropic responses in columella cells and in root system architecture (RSA). Together with PIN3 and PIN7, involved in the connective auxin transport (CAT) that ensures communication across the shoot system, and modulates strigolactone-mediated shoot branching control. The abcb19 pin3 pin4 pin7 quadruple mutant exhibits an additive phenotype on strigolactone-mediated bud outgrowth responses and shoot branching control. The chain is Auxin efflux carrier component 4 from Arabidopsis thaliana (Mouse-ear cress).